Consider the following 637-residue polypeptide: 1-deoxy-D-xylulose-5-phosphate synthase (637 aa).

Thiamine diphosphate is bound by residues His76 and 117–119 (GHS). Asp148 is a Mg(2+) binding site. Residues 149 to 150 (GA), Asn177, Tyr294, and Glu381 contribute to the thiamine diphosphate site. Asn177 serves as a coordination point for Mg(2+).

This sequence belongs to the transketolase family. DXPS subfamily. As to quaternary structure, homodimer. Requires Mg(2+) as cofactor. Thiamine diphosphate is required as a cofactor.

The catalysed reaction is D-glyceraldehyde 3-phosphate + pyruvate + H(+) = 1-deoxy-D-xylulose 5-phosphate + CO2. It participates in metabolic intermediate biosynthesis; 1-deoxy-D-xylulose 5-phosphate biosynthesis; 1-deoxy-D-xylulose 5-phosphate from D-glyceraldehyde 3-phosphate and pyruvate: step 1/1. Functionally, catalyzes the acyloin condensation reaction between C atoms 2 and 3 of pyruvate and glyceraldehyde 3-phosphate to yield 1-deoxy-D-xylulose-5-phosphate (DXP). This chain is 1-deoxy-D-xylulose-5-phosphate synthase, found in Neisseria meningitidis serogroup B (strain ATCC BAA-335 / MC58).